A 154-amino-acid chain; its full sequence is 3-hydroxyacyl-[acyl-carrier-protein] dehydratase FabZ (154 aa).

Histidine 60 is an active-site residue.

This sequence belongs to the thioester dehydratase family. FabZ subfamily.

It localises to the cytoplasm. The enzyme catalyses a (3R)-hydroxyacyl-[ACP] = a (2E)-enoyl-[ACP] + H2O. Functionally, involved in unsaturated fatty acids biosynthesis. Catalyzes the dehydration of short chain beta-hydroxyacyl-ACPs and long chain saturated and unsaturated beta-hydroxyacyl-ACPs. This is 3-hydroxyacyl-[acyl-carrier-protein] dehydratase FabZ from Haemophilus ducreyi (strain 35000HP / ATCC 700724).